The chain runs to 117 residues: uncharacterized protein (117 aa).

The next 2 helical transmembrane spans lie at 43–63 (APIM…LMLL) and 73–93 (AVQH…VFIV).

It is found in the cell membrane. This is an uncharacterized protein from Bacillus subtilis (strain 168).